The primary structure comprises 286 residues: Acetylglutamate kinase (286 aa).

Residues 63–64, Arg-85, and Asn-178 each bind substrate; that span reads GG.

Belongs to the acetylglutamate kinase family. ArgB subfamily.

The protein localises to the cytoplasm. It carries out the reaction N-acetyl-L-glutamate + ATP = N-acetyl-L-glutamyl 5-phosphate + ADP. Its pathway is amino-acid biosynthesis; L-arginine biosynthesis; N(2)-acetyl-L-ornithine from L-glutamate: step 2/4. Functionally, catalyzes the ATP-dependent phosphorylation of N-acetyl-L-glutamate. This is Acetylglutamate kinase from Clostridioides difficile (strain 630) (Peptoclostridium difficile).